The primary structure comprises 197 residues: Large ribosomal subunit protein bL25 (197 aa).

The protein belongs to the bacterial ribosomal protein bL25 family. CTC subfamily. As to quaternary structure, part of the 50S ribosomal subunit; part of the 5S rRNA/L5/L18/L25 subcomplex. Contacts the 5S rRNA. Binds to the 5S rRNA independently of L5 and L18.

Its function is as follows. This is one of the proteins that binds to the 5S RNA in the ribosome where it forms part of the central protuberance. The protein is Large ribosomal subunit protein bL25 of Streptomyces avermitilis (strain ATCC 31267 / DSM 46492 / JCM 5070 / NBRC 14893 / NCIMB 12804 / NRRL 8165 / MA-4680).